The sequence spans 101 residues: Ubiquitin-related modifier 1 homolog 1 (101 aa).

A 1-thioglycine modification is found at G101. G101 is covalently cross-linked (Glycyl lysine isopeptide (Gly-Lys) (interchain with K-? in acceptor proteins)).

The protein belongs to the URM1 family. C-terminal thiocarboxylation occurs in 2 steps, it is first acyl-adenylated (-COAMP) via the hesA/moeB/thiF part of the MOCS3 homolog, then thiocarboxylated (-COSH) via the rhodanese domain of the MOCS3 homolog.

Its subcellular location is the cytoplasm. It functions in the pathway tRNA modification; 5-methoxycarbonylmethyl-2-thiouridine-tRNA biosynthesis. Functionally, acts as a sulfur carrier required for 2-thiolation of mcm(5)S(2)U at tRNA wobble positions of cytosolic tRNA(Lys), tRNA(Glu) and tRNA(Gln). Serves as sulfur donor in tRNA 2-thiolation reaction by being thiocarboxylated (-COSH) at its C-terminus by MOCS3. The sulfur is then transferred to tRNA to form 2-thiolation of mcm(5)S(2)U. Also acts as a ubiquitin-like protein (UBL) that is covalently conjugated via an isopeptide bond to lysine residues of target proteins. The thiocarboxylated form serves as substrate for conjugation and oxidative stress specifically induces the formation of UBL-protein conjugates. The chain is Ubiquitin-related modifier 1 homolog 1 from Arabidopsis thaliana (Mouse-ear cress).